We begin with the raw amino-acid sequence, 173 residues long: Alpha-crystallin A chain (173 aa).

Methionine 1 is subject to N-acetylmethionine. Residues 1–63 (MDVTIQHPWF…RTVLDSGISE (63 aa)) form a required for complex formation with BFSP1 and BFSP2; during homooligomerization, mediates the association of 2 dimers to form a tetramer region. A Deamidated glutamine; partial modification is found at glutamine 6. Serine 45 bears the Phosphoserine mark. At glutamine 50 the chain carries Deamidated glutamine; partial. The sHSP domain occupies 52-164 (LFRTVLDSGI…AERAIPVSRE (113 aa)). Lysine 70 carries the N6-acetyllysine modification. A Deamidated glutamine; partial modification is found at glutamine 90. Position 99 is an N6-acetyllysine (lysine 99). A Zn(2+)-binding site is contributed by histidine 100. At asparagine 101 the chain carries Deamidated asparagine; partial. 2 residues coordinate Zn(2+): glutamate 102 and histidine 107. Serine 122 is subject to Phosphoserine. Asparagine 123 carries the deamidated asparagine; partial modification. Cysteines 131 and 142 form a disulfide. Residue glutamine 147 is modified to Deamidated glutamine; partial. Zn(2+) is bound at residue histidine 154. Residue serine 162 is glycosylated (O-linked (GlcNAc) serine).

The protein belongs to the small heat shock protein (HSP20) family. In terms of assembly, heteropolymer composed of three CRYAA and one CRYAB subunits. Inter-subunit bridging via zinc ions enhances stability, which is crucial as there is no protein turn over in the lens. Can also form homodimers and homotetramers (dimers of dimers) which serve as the building blocks of homooligomers. Within homooligomers, the zinc-binding motif is created from residues of 3 different molecules. His-100 and Glu-102 from one molecule are ligands of the zinc ion, and His-107 and His-154 residues from additional molecules complete the site with tetrahedral coordination geometry. Part of a complex required for lens intermediate filament formation composed of BFSP1, BFSP2 and CRYAA. In terms of processing, O-glycosylated; contains N-acetylglucosamine side chains. Post-translationally, deamidation of Asn-101 in lens occurs mostly during the first 30 years of age, followed by a small additional amount of deamidation (approximately 5%) during the next approximately 38 years, resulting in a maximum of approximately 50% deamidation during the lifetime of the individual. Phosphorylation on Ser-122 seems to be developmentally regulated. Absent in the first months of life, it appears during the first 12 years of human lifetime. The relative amount of phosphorylated form versus unphosphorylated form does not change over the lifetime of the individual. In terms of processing, acetylation at Lys-70 may increase chaperone activity. Post-translationally, undergoes age-dependent proteolytical cleavage at the C-terminus. Alpha-crystallin A(1-172) is the most predominant form produced most rapidly during the first 12 years of age and after this age is present in approximately 50% of the lens molecules. In young individuals and during the first approximately 30 years of life, less than half molecules contain an intramolecular disulfide bond (oxidized form), while in the remaining fraction the cysteines are in the free sulfhydryl form (reduced form). With aging, the amount of oxidized form increases up to 90% and it becomes a major constituent of high molecular weight aggregates, concomitant with an age-dependent loss of its chaperone activity. The reduced form is undetectable in cataractous lenses. Expressed in the eye lens (at protein level).

It is found in the cytoplasm. The protein resides in the nucleus. Its function is as follows. Contributes to the transparency and refractive index of the lens. In its oxidized form (absence of intramolecular disulfide bond), acts as a chaperone, preventing aggregation of various proteins under a wide range of stress conditions. Required for the correct formation of lens intermediate filaments as part of a complex composed of BFSP1, BFSP2 and CRYAA. This Homo sapiens (Human) protein is Alpha-crystallin A chain (CRYAA).